A 300-amino-acid chain; its full sequence is Polyamine aminopropyltransferase (300 aa).

One can recognise a PABS domain in the interval 4 to 237 (WHWHIEWQTP…GLWGFVYASD (234 aa)). Q33 lines the S-methyl-5'-thioadenosine pocket. H64 and E88 together coordinate spermidine. Residues D108 and 140-141 (DG) contribute to the S-methyl-5'-thioadenosine site. The active-site Proton acceptor is D158. P167 is a binding site for S-methyl-5'-thioadenosine.

This sequence belongs to the spermidine/spermine synthase family. In terms of assembly, homodimer or homotetramer.

It is found in the cytoplasm. The enzyme catalyses S-adenosyl 3-(methylsulfanyl)propylamine + putrescine = S-methyl-5'-thioadenosine + spermidine + H(+). Its pathway is amine and polyamine biosynthesis; spermidine biosynthesis; spermidine from putrescine: step 1/1. Functionally, catalyzes the irreversible transfer of a propylamine group from the amino donor S-adenosylmethioninamine (decarboxy-AdoMet) to putrescine (1,4-diaminobutane) to yield spermidine. The chain is Polyamine aminopropyltransferase from Sulfurisphaera tokodaii (strain DSM 16993 / JCM 10545 / NBRC 100140 / 7) (Sulfolobus tokodaii).